We begin with the raw amino-acid sequence, 176 residues long: MKTQCASTWLLGMTLILCSVHIYSLRRCLISVDMRLIEKSFHEIKRAMQTKDTFKNVTILSLENLRSIKPGDVCCMTNNLLTFYRDRVFQDHQERSLEVLRRISSIANSFLCVQKSLERCQVHRQCNCSQEATNATRIIHDNYNQLEVSSAALKSLGELNILLAWIDRNHLETPAA.

The signal sequence occupies residues 1-24 (MKTQCASTWLLGMTLILCSVHIYS). 3 disulfide bridges follow: Cys28–Cys120, Cys74–Cys126, and Cys75–Cys128. N-linked (GlcNAc...) asparagine glycosylation is present at Asn56. Residues Asn127 and Asn134 are each glycosylated (N-linked (GlcNAc...) asparagine).

The protein belongs to the IL-10 family.

The protein resides in the secreted. Functionally, cytokine that functions as an anti-inflammatory and proangiogenic factor. Polarizes adaptive immunity to an anti-inflammatory phenotype through induction of T-helper 2 responses by both down-regulation of IFN-gamma and up-regulation of IL4 and IL5. Produced by osteocytes, stimulates granulopoiesis and neutrophil formation. Exerts its biological effect through a receptor complex consisting of a heterodimer of IL20RA and IL20RB. In turn, activates the Janus kinase (JAK) and signal transducer and activator of transcription (STAT) pathway, and importantly, STAT3. This Mus musculus (Mouse) protein is Interleukin-19 (Il19).